The primary structure comprises 369 residues: Protein V (369 aa).

Disordered stretches follow at residues Met-1–Ser-24 and Ser-38–Arg-320. Over residues Ile-7 to Gly-20 the composition is skewed to basic and acidic residues. The segment covering Leu-50–Gly-61 has biased composition (polar residues). Composition is skewed to basic and acidic residues over residues Ala-99 to Asn-110 and Gly-150 to Asp-168. Phosphoserine; by host occurs at positions 249, 257, and 260. Zn(2+) contacts are provided by His-318, Cys-337, Cys-341, Cys-353, Cys-355, Cys-358, Cys-362, and Cys-365.

This sequence belongs to the paramyxoviruses V protein family. Interacts with host IFIH1/MDA5 and DHX58/LGP2. Interacts with host IRF3. Interacts with host RIGI regulatory protein (via CARDs domain) and host TRIM25 (via SPRY domain); these interactions prevent TRIM25-mediated ubiquitination of RIG-I and disrupts downstream RIG-I signaling.

It is found in the host cytoplasm. Functionally, plays an essential role in the inhibition of host immune response. Prevents the establishment of cellular antiviral state by blocking interferon-alpha/beta (IFN-alpha/beta) production and signaling pathway. Interacts with host IFIH1/MDA5 and DHX58/LGP2 to inhibit the transduction pathway involved in the activation of IFN-beta promoter, thus protecting the virus against cell antiviral state. Also interacts with and inhibits host IRF3. Blocks the type I interferon signaling pathway by disrupting the RIG-I signaling pathway. In Sendai virus (strain Hamamatsu) (SeV), this protein is Protein V (P/V/C).